Here is a 437-residue protein sequence, read N- to C-terminus: Protein translocase subunit SecY (437 aa).

Transmembrane regions (helical) follow at residues 23–43 (IVFLIVAIIVFRIGSFIPIPG), 77–97 (IFALGIMPYISASIIIQLLTL), 125–145 (LILALVQSIGIAMTLPNIAGI), 154–174 (FYFYLIAIISLVTSTMFLMWL), 183–203 (IGNGISIIIFIGIIAGLPSAI), 217–237 (ILLFLFILLLIFSVIFLVVFM), 271–291 (MAGVIPAIFASSIVLFPATII), 315–335 (YLILYISAIVFFCFFYTGLVF), 367–387 (IMLRLTLVGSLYITFICLIPE), and 395–415 (VPFYFGGTSLLIVVVVIIDFI).

Belongs to the SecY/SEC61-alpha family. In terms of assembly, component of the Sec protein translocase complex. Heterotrimer consisting of SecY, SecE and SecG subunits. The heterotrimers can form oligomers, although 1 heterotrimer is thought to be able to translocate proteins. Interacts with the ribosome. Interacts with SecDF, and other proteins may be involved. Interacts with SecA.

The protein localises to the cell membrane. In terms of biological role, the central subunit of the protein translocation channel SecYEG. Consists of two halves formed by TMs 1-5 and 6-10. These two domains form a lateral gate at the front which open onto the bilayer between TMs 2 and 7, and are clamped together by SecE at the back. The channel is closed by both a pore ring composed of hydrophobic SecY resides and a short helix (helix 2A) on the extracellular side of the membrane which forms a plug. The plug probably moves laterally to allow the channel to open. The ring and the pore may move independently. The sequence is that of Protein translocase subunit SecY from Buchnera aphidicola subsp. Acyrthosiphon pisum (strain APS) (Acyrthosiphon pisum symbiotic bacterium).